The following is a 342-amino-acid chain: MLKIAVYIVSLFTFLEAHVTTRNNQRIEPLSDEMISFINEHPDAGWKADKSDRFHSLDDARILMGARKEDAEMKRNRRPTVDHHDLNVEIPSQFDSRKKWPHCKSISQIRDQSRCGSCWAFGAVEAMTDRICIQSGGGQSAELSALDLISCCKDCGDGCQGGFPGVAWDYWVKRGIVTGGSKENHTGCQPYPFPKCEHHTKGKYPACGTKIYKTPQCKQTCQKGYKTPYEQDKHYGDESYNVQNNEKVIQRDIMMYGPVEAAFDVYEDFLNYKSGIYRHVTGSIVGGHAIRIIGWGVEKRTPYWLIANSWNEDWGEKGLFRMVRGRDECSIESDVVAGLIKT.

The first 17 residues, 1 to 17 (MLKIAVYIVSLFTFLEA), serve as a signal peptide directing secretion. Residues 18 to 89 (HVTTRNNQRI…TVDHHDLNVE (72 aa)) constitute a propeptide, activation peptide. 6 disulfides stabilise this stretch: C103–C132, C115–C159, C151–C217, C152–C155, C188–C221, and C196–C207. C118 is an active-site residue. Residues H288 and N308 contribute to the active site.

The protein belongs to the peptidase C1 family. Intestine (gut).

Thiol protease. Has a role as a digestive enzyme. This is Cathepsin B-like cysteine proteinase (CATB) from Schistosoma japonicum (Blood fluke).